The following is a 378-amino-acid chain: Erythronate-4-phosphate dehydrogenase (378 aa).

Residues S45 and T67 each coordinate substrate. D147 is a binding site for NAD(+). R209 is an active-site residue. D233 is a binding site for NAD(+). E238 is a catalytic residue. H255 (proton donor) is an active-site residue. Position 258 (G258) interacts with NAD(+). Y259 is a binding site for substrate.

It belongs to the D-isomer specific 2-hydroxyacid dehydrogenase family. PdxB subfamily. In terms of assembly, homodimer.

It is found in the cytoplasm. The catalysed reaction is 4-phospho-D-erythronate + NAD(+) = (R)-3-hydroxy-2-oxo-4-phosphooxybutanoate + NADH + H(+). Its pathway is cofactor biosynthesis; pyridoxine 5'-phosphate biosynthesis; pyridoxine 5'-phosphate from D-erythrose 4-phosphate: step 2/5. In terms of biological role, catalyzes the oxidation of erythronate-4-phosphate to 3-hydroxy-2-oxo-4-phosphonooxybutanoate. This Shewanella denitrificans (strain OS217 / ATCC BAA-1090 / DSM 15013) protein is Erythronate-4-phosphate dehydrogenase.